Reading from the N-terminus, the 549-residue chain is Cation/acetate symporter ActP (549 aa).

At 1–32 (MKRVLTALAATLPFAANAADAISGAVERQPTN) the chain is on the periplasmic side. A helical transmembrane segment spans residues 33–55 (WQAIIMFLIFVVFTLGITYWASK). The Cytoplasmic segment spans residues 56-75 (RVRSRNDYYTAGGNITGFQN). Residues 76–98 (GLAIAGDYMSAASFLGISALVFT) form a helical membrane-spanning segment. Topologically, residues 99 to 102 (SGYD) are periplasmic. Residues 103 to 125 (GLIYSLGFLVGWPIILFLIAERL) traverse the membrane as a helical segment. The Cytoplasmic portion of the chain corresponds to 126 to 145 (RNLGRYTFADVASYRLKQGP). Residues 146-168 (IRILSACGSLVVVALYLIAQMVG) form a helical membrane-spanning segment. Residues 169-182 (AGKLIELLFGLNYH) are Periplasmic-facing. Residues 183–205 (IAVVLVGVLMMMYVLFGGMLATT) form a helical membrane-spanning segment. Residues 206–211 (WVQIIK) are Cytoplasmic-facing. A helical transmembrane segment spans residues 212–234 (AVLLLFGASFMAFMVMKHVGFSF). The Periplasmic portion of the chain corresponds to 235–263 (NNLFSEAMAVHPKGVDIMKPGGLVKDPIS). Residues 264-286 (ALSLGLGLMFGTAGLPHILMHFF) form a helical membrane-spanning segment. Residues 287–297 (TVSDAREARKS) lie on the Cytoplasmic side of the membrane. A helical membrane pass occupies residues 298–320 (VFYATGFMGYFYILTFIIGFGAI). Residues 321 to 358 (MLVGANPEYKDAAGHLIGGNNMAAVHLANAVGGNLFLG) lie on the Periplasmic side of the membrane. Residues 359–381 (FISAVAFATILAVVAGLTLAGAS) traverse the membrane as a helical segment. The Cytoplasmic portion of the chain corresponds to 382–401 (AVSHDLYANVFKKGATEREE). The chain crosses the membrane as a helical span at residues 402-424 (LRVSKITVLILGVIAIILGVLFE). Residues 425–427 (NQN) lie on the Periplasmic side of the membrane. A helical transmembrane segment spans residues 428–450 (IAFMVGLAFAIAASCNFPIILLS). Residues 451 to 461 (MYWSKLTTRGA) lie on the Cytoplasmic side of the membrane. Residues 462–484 (MLGGWLGLITAVVLMILGPTIWV) form a helical membrane-spanning segment. The Periplasmic portion of the chain corresponds to 485 to 493 (QILGHEKAI). A helical transmembrane segment spans residues 494–516 (FPYEYPALFSISVAFLGIWLFSA). Residues 517–549 (TDNSAEGARERELFRAQFIRSQTGFGVEQGRAH) are Cytoplasmic-facing.

This sequence belongs to the sodium:solute symporter (SSF) (TC 2.A.21) family.

The protein localises to the cell inner membrane. In terms of biological role, transports acetate. This chain is Cation/acetate symporter ActP (actP), found in Escherichia coli O6:H1 (strain CFT073 / ATCC 700928 / UPEC).